The following is a 322-amino-acid chain: Cysteine protease yopT1 (322 aa).

Active-site residues include C139, H258, and D274.

This sequence belongs to the peptidase C58 family. In terms of assembly, interacts with human ARHA.

The protein localises to the secreted. Functionally, cysteine protease, which is translocated into infected cells and plays a central role in pathogenesis by cleaving the C-terminus end of the human small GTPase RhoA/ARHA, a regulator of cytoskeleton. Once cleaved, ARHA loses its lipid modification, and is released from the cell membrane, leading to the subsequent disruption of actin cytoskeleton of the host cell. In Yersinia enterocolitica, this protein is Cysteine protease yopT1 (yopT1).